Reading from the N-terminus, the 264-residue chain is Hydroxyethylthiazole kinase (264 aa).

Met40 provides a ligand contact to substrate. Residues Lys116 and Thr161 each contribute to the ATP site. Gly188 lines the substrate pocket.

The protein belongs to the Thz kinase family. Mg(2+) serves as cofactor.

The enzyme catalyses 5-(2-hydroxyethyl)-4-methylthiazole + ATP = 4-methyl-5-(2-phosphooxyethyl)-thiazole + ADP + H(+). The protein operates within cofactor biosynthesis; thiamine diphosphate biosynthesis; 4-methyl-5-(2-phosphoethyl)-thiazole from 5-(2-hydroxyethyl)-4-methylthiazole: step 1/1. Its function is as follows. Catalyzes the phosphorylation of the hydroxyl group of 4-methyl-5-beta-hydroxyethylthiazole (THZ). The sequence is that of Hydroxyethylthiazole kinase from Staphylococcus carnosus (strain TM300).